Consider the following 557-residue polypeptide: Polypyrimidine tract-binding protein 1 (557 aa).

Met-1 carries the N-acetylmethionine modification. At Ser-16 the chain carries Phosphoserine. RRM domains lie at 59–143, 184–260, and 363–437; these read RVIH…SSPN, LRII…FSKL, and SVLL…LSKH. A Glycyl lysine isopeptide (Lys-Gly) (interchain with G-Cter in SUMO2) cross-link involves residue Lys-65. Tyr-127 carries the phosphotyrosine modification. Thr-138 is subject to Phosphothreonine. The residue at position 141 (Ser-141) is a Phosphoserine. Lys-218 is covalently cross-linked (Glycyl lysine isopeptide (Lys-Gly) (interchain with G-Cter in SUMO2)). Residue Ser-459 is modified to Phosphoserine. The RRM 4 domain maps to 480 to 555; that stretch reads ATLHLSNIPP…HHLRVSFSKS (76 aa).

In terms of assembly, monomer. Part of a ternary complex containing KHSRP, PTBP1, PTBP2 and HNRPH1. Interacts with RAVER1 and SFPQ. Interacts with IVNS1ABP (via BACK domain); the interaction is direct.

The protein localises to the nucleus. In terms of biological role, plays a role in pre-mRNA splicing and in the regulation of alternative splicing events. Activates exon skipping of its own pre-mRNA during muscle cell differentiation. Binds to the polypyrimidine tract of introns. May promote RNA looping when bound to two separate polypyrimidine tracts in the same pre-mRNA. May promote the binding of U2 snRNP to pre-mRNA. Cooperates with RAVER1 to modulate switching between mutually exclusive exons during maturation of the TPM1 pre-mRNA. Represses the splicing of MAPT/Tau exon 10. Binds to polypyrimidine-rich controlling element (PCE) of CFTR and promotes exon skipping of CFTR exon 9, thereby antagonizing TIA1 and its role in exon inclusion of CFTR exon 9. Plays a role in the splicing of pyruvate kinase PKM by binding repressively to a polypyrimidine tract flanking PKM exon 9, inhibiting exon 9 inclusion and resulting in exon 10 inclusion and production of the PKM M2 isoform. In case of infection by picornaviruses, binds to the viral internal ribosome entry site (IRES) and stimulates the IRES-mediated translation. This is Polypyrimidine tract-binding protein 1 (PTBP1) from Homo sapiens (Human).